Reading from the N-terminus, the 410-residue chain is Transcription factor PHYTOCHROME INTERACTING FACTOR-LIKE 13 (410 aa).

Residues 82–92 (AAAAAGPSSHH) show a composition bias toward low complexity. Disordered stretches follow at residues 82–110 (AAAAAGPSSHHAPPPDLPPPAARPPMRSG) and 137–225 (CRDA…AEVH). Over residues 93 to 104 (APPPDLPPPAAR) the composition is skewed to pro residues. A compositionally biased stretch (basic and acidic residues) spans 187–197 (GREDSDSRSED). Residues 209–219 (SSRRYGSKRRT) show a composition bias toward basic residues. The tract at residues 220–233 (RAAEVHNLSERRRR) is basic motif. The bHLH domain maps to 220 to 269 (RAAEVHNLSERRRRDRINEKMRALQELIPHCNKTDKASILDEAIEYLKSL). Residues 234–269 (DRINEKMRALQELIPHCNKTDKASILDEAIEYLKSL) form a helix-loop-helix motif region. The disordered stretch occupies residues 357–410 (PFLHPDGWQTVPPQVSGPYASGPQVAQQNQIPKASASTVLPNSGAEQPPTSDGI). Positions 380–410 (QVAQQNQIPKASASTVLPNSGAEQPPTSDGI) are enriched in polar residues.

The protein belongs to the bHLH protein family. As to quaternary structure, interacts with PRR1. Interacts with LF. In terms of tissue distribution, highly expressed in the node portions of the stem. Expressed in the leaves and the basal part of shoots.

It localises to the nucleus. Transcription factor that may act as negative regulator of phyB-dependent light signal transduction. Transcription activator that acts as a positive regulator of internode elongation. May function via regulation of cell wall-related genes. May play a role in a drought-associated growth-restriction mechanism in response to drought stress. This chain is Transcription factor PHYTOCHROME INTERACTING FACTOR-LIKE 13, found in Oryza sativa subsp. japonica (Rice).